Here is a 536-residue protein sequence, read N- to C-terminus: Enterobactin synthase component E (536 aa).

The substrate site is built by Asn-235, Ser-240, Gly-309, Val-331, Ala-335, Asp-415, and Lys-432. The interval 438 to 439 (GG) is phosphopantetheine binding. Lys-441 is a substrate binding site.

It belongs to the ATP-dependent AMP-binding enzyme family. EntE subfamily. As to quaternary structure, proteins EntB, EntD, EntE, and EntF form a multienzyme complex called enterobactin synthase. Monomer. EntA and EntE interact together.

It is found in the membrane. The enzyme catalyses 3 2,3-dihydroxybenzoate + 3 L-serine + 6 ATP = enterobactin + 6 AMP + 6 diphosphate + 4 H(+). It carries out the reaction 2,3-dihydroxybenzoate + holo-[ACP] + ATP = 2,3-dihydroxybenzoyl-[ACP] + AMP + diphosphate. The catalysed reaction is 2,3-dihydroxybenzoyl-5'-AMP + holo-[ACP] = 2,3-dihydroxybenzoyl-[ACP] + AMP + H(+). It participates in siderophore biosynthesis; enterobactin biosynthesis. Inhibited by the adenylate analogs, 5'-O-[N-(salicyl)sulfamoyl]adenosine (Sal-AMS) and 5'-O-[N-(2,3-dihydroxybenzoyl)sulfamoyl]adenosine (DHB-AMS). Adenylation of 2,3-dihydroxybenzoate (DHB) is enhanced by a protein-protein interaction between the EntA and EntE. Involved in the biosynthesis of the siderophore enterobactin (enterochelin), which is a macrocyclic trimeric lactone of N-(2,3-dihydroxybenzoyl)-serine. The serine trilactone serves as a scaffolding for the three catechol functionalities that provide hexadentate coordination for the tightly ligated iron(2+) atoms. EntE processes via a two-step adenylation-ligation reaction (bi-uni-uni-bi ping-pong mechanism). First, it catalyzes the activation of the carboxylate group of 2,3-dihydroxy-benzoate (DHB), via a reversible ATP-dependent pyrophosphate exchange reactions to yield the acyladenylate intermediate 2,3-dihydroxybenzoyl-AMP. It can also transfer AMP to salicylate, 2,4-dihydroxybenzoate, gentisate and 2,3,4-trihydroxybenzoate. In the second step, DHB is transferred from 2,3-dihydroxybenzoyl-AMP onto the phosphopantetheinylated EntB (holo-EntB) to form DHB-holo-EntB. Then this product will serve in the formation of the amide bond between 2,3-dihydroxybenzoate (DHB) and L-serine. It can also transfer adenylated salicylate to holo-EntB. In Escherichia coli (strain K12), this protein is Enterobactin synthase component E.